The chain runs to 151 residues: Cytochrome c-type biogenesis protein CcmE (151 aa).

Topologically, residues 1-8 are cytoplasmic; that stretch reads MNPQRKKR. A helical; Signal-anchor for type II membrane protein transmembrane segment spans residues 9–29; that stretch reads LFLILGLLAGVAVAVGFALSA. The Periplasmic portion of the chain corresponds to 30–151; sequence LQQNINLFYT…QAASGAEAKP (122 aa). Heme is bound by residues histidine 124 and tyrosine 128.

Belongs to the CcmE/CycJ family.

The protein localises to the cell inner membrane. In terms of biological role, heme chaperone required for the biogenesis of c-type cytochromes. Transiently binds heme delivered by CcmC and transfers the heme to apo-cytochromes in a process facilitated by CcmF and CcmH. The chain is Cytochrome c-type biogenesis protein CcmE from Pseudomonas putida (strain W619).